The following is a 394-amino-acid chain: GDP-mannose transporter (394 aa).

The Cytoplasmic portion of the chain corresponds to 1-55 (MADKKNEDFVVRMPDNGTVEKEPFLARSPPARARTGSGGGFGDSFSLARVANNPP). A helical membrane pass occupies residues 56 to 76 (AAILAYCLSSISMTVVNKYVV). The Lumenal segment spans residues 77–80 (SGSE). A helical transmembrane segment spans residues 81-101 (WNLNFFYLAVQAIVCIIAILF). Residues 102–121 (CKQIGIITNLAPFDNVKAKK) lie on the Cytoplasmic side of the membrane. A helical transmembrane segment spans residues 122-144 (WFPVSLLLVGMIYTSTKALQFLS). Residues 145–149 (VPVYT) are Lumenal-facing. Residues 150–167 (IFKNLTIIAIAYGEVLWF) traverse the membrane as a helical segment. The Cytoplasmic portion of the chain corresponds to 168 to 173 (GGSVSP). Residues 174 to 198 (LALVSFGLMVLSSVVAAWADIQSAI) traverse the membrane as a helical segment. Topologically, residues 199-213 (HGGSHPSEASTAIST) are lumenal. A helical transmembrane segment spans residues 214–234 (LNAGYAWMGMNVFCSAAYLLG). The Cytoplasmic portion of the chain corresponds to 235–246 (MRKVIHKMNFKD). A helical transmembrane segment spans residues 247-267 (WDSMFYNNLLTIPVLIVCSLI). At 268 to 287 (AEDWSAANLARNFPIESRNA) the chain is on the lumenal side. The chain crosses the membrane as a helical span at residues 288–308 (LFIGMIYSGLGAIFISYCSAW). At 309–316 (CIRVTTST) the chain is on the cytoplasmic side. Residues 317-339 (TYSMVGALNKLPIAISGLVFFSA) traverse the membrane as a helical segment. The Lumenal segment spans residues 340–342 (PVT). The helical transmembrane segment at 343–362 (FGSVSAIVIGFISGIVYAWA) threads the bilayer. Over 363–394 (KARQSSQAKSALPTQQPVMSASSQSNKDASNS) the chain is Cytoplasmic. Residues 371-394 (KSALPTQQPVMSASSQSNKDASNS) form a disordered region. Positions 374 to 394 (LPTQQPVMSASSQSNKDASNS) are enriched in polar residues.

The protein belongs to the TPT transporter family. SLC35D subfamily. Homooligomer.

The protein localises to the golgi apparatus membrane. The protein resides in the cytoplasmic vesicle membrane. It is found in the endoplasmic reticulum membrane. Involved in the import of GDP-mannose from the cytoplasm into the Golgi lumen. In Pyricularia oryzae (strain 70-15 / ATCC MYA-4617 / FGSC 8958) (Rice blast fungus), this protein is GDP-mannose transporter (VRG4).